We begin with the raw amino-acid sequence, 472 residues long: Nuclear receptor subfamily 0 group B member 1 (472 aa).

3 tandem repeats follow at residues 1 to 67, 68 to 135, and 136 to 202. The segment at 1–255 is 4 X 67 AA tandem repeats; the sequence is MAGEDHPWHG…RPIALKDPQV (255 aa). 3 short sequence motifs (LXXLL motif) span residues 13–17, 80–84, and 148–152; these read LYNLL, LYSML, and LYSLL. Positions 190–471 constitute an NR LBD domain; it reads QSTQAMAFLY…DMMLEMLCAK (282 aa). Residues 203-255 form a 4; truncated repeat; it reads VCCEEQPQQSSVASDTPVRADQTPAAPQEQPRAPWWDTSSGVQRPIALKDPQV. 2 disordered regions span residues 214 to 237 and 326 to 345; these read VASD…RAPW and RRQE…EQPQ. Positions 463 to 468 match the AF-2 motif motif; that stretch reads MMLEML.

The protein belongs to the nuclear hormone receptor family. NR0 subfamily. Homodimer. Interacts with NR5A1, NR5A2, NR0B2 and with COPS2. Interacts with ESRRB; represses ESRRB activity at the GATA6 promoter.

The protein resides in the nucleus. The protein localises to the cytoplasm. Nuclear receptor that lacks a DNA-binding domain and acts as a corepressor that inhibits the transcriptional activity of other nuclear receptors through heterodimeric interactions. Component of a cascade required for the development of the hypothalamic-pituitary-adrenal-gonadal axis. May also have a role in the development of the embryo and in the maintenance of embryonic stem cell pluripotency. The polypeptide is Nuclear receptor subfamily 0 group B member 1 (Nr0b1) (Rattus norvegicus (Rat)).